The chain runs to 179 residues: Peptidyl-tRNA hydrolase (179 aa).

Tyr15 serves as a coordination point for tRNA. Residue His20 is the Proton acceptor of the active site. TRNA-binding residues include Tyr66, Asn68, and Asn114.

Belongs to the PTH family. As to quaternary structure, monomer.

It localises to the cytoplasm. It carries out the reaction an N-acyl-L-alpha-aminoacyl-tRNA + H2O = an N-acyl-L-amino acid + a tRNA + H(+). In terms of biological role, hydrolyzes ribosome-free peptidyl-tRNAs (with 1 or more amino acids incorporated), which drop off the ribosome during protein synthesis, or as a result of ribosome stalling. Its function is as follows. Catalyzes the release of premature peptidyl moieties from peptidyl-tRNA molecules trapped in stalled 50S ribosomal subunits, and thus maintains levels of free tRNAs and 50S ribosomes. The chain is Peptidyl-tRNA hydrolase from Chlamydia trachomatis serovar L2 (strain ATCC VR-902B / DSM 19102 / 434/Bu).